We begin with the raw amino-acid sequence, 244 residues long: Thiol S-methyltransferase TMT1B (244 aa).

A signal peptide spans 1–23; sequence MDVLVPLLQLLVLLLTLPLHLLA.

This sequence belongs to the methyltransferase superfamily. Highly expressed in liver and kidney. No expression in testis, heart, lung, brain, spleen or cultured fibroblasts.

It is found in the endoplasmic reticulum membrane. It localises to the lipid droplet. The protein localises to the microsome. The protein resides in the cytoplasm. Its subcellular location is the cytosol. It catalyses the reaction a thiol + S-adenosyl-L-methionine = a methyl thioether + S-adenosyl-L-homocysteine + H(+). Thiol S-methyltransferase that catalyzes the transfer of a methyl group from S-adenosyl-L-methionine to alkyl and phenolic thiol-containing acceptor substrates. Together with TMT1B accounts for most of S-thiol methylation activity in the endoplasmic reticulum of hepatocytes. Selectively methylates S-centered nucleophiles from metabolites such as hydrogen sulfide and dithiothreitol. The polypeptide is Thiol S-methyltransferase TMT1B (Tmt1b) (Rattus norvegicus (Rat)).